The primary structure comprises 466 residues: Asparagine--tRNA ligase (466 aa).

It belongs to the class-II aminoacyl-tRNA synthetase family. In terms of assembly, homodimer.

Its subcellular location is the cytoplasm. The catalysed reaction is tRNA(Asn) + L-asparagine + ATP = L-asparaginyl-tRNA(Asn) + AMP + diphosphate + H(+). This Sodalis glossinidius (strain morsitans) protein is Asparagine--tRNA ligase.